The sequence spans 32 residues: MASEIFGIAVVFWVLIPVGLAGGALLLKLQGD.

A helical transmembrane segment spans residues 9–27; sequence AVVFWVLIPVGLAGGALLL.

It belongs to the PetM family. The 4 large subunits of the cytochrome b6-f complex are cytochrome b6, subunit IV (17 kDa polypeptide, PetD), cytochrome f and the Rieske protein, while the 4 small subunits are PetG, PetL, PetM and PetN. The complex functions as a dimer.

Its subcellular location is the cellular thylakoid membrane. Functionally, component of the cytochrome b6-f complex, which mediates electron transfer between photosystem II (PSII) and photosystem I (PSI), cyclic electron flow around PSI, and state transitions. The polypeptide is Cytochrome b6-f complex subunit 7 (Synechococcus sp. (strain CC9311)).